A 353-amino-acid chain; its full sequence is MDEKTSKAASEKAKALAAALSQIEKQFGKGSIMRYGDNEVEHDIQVVSTGSLGLDIALGVGGLPRGRVVEIYGPESSGKTTLTLQVIAEMQKVGGTCAFVDAEHALDVQYASKLGVNLGDLLISQPDTGEQALEITDALVRSGSVDLIVIDSVAALVPKAEIEGEMGDALPGLQARLMSQALRKLTATIKRTNCMVIFINQIRMKIGVMFGNPETTTGGNALKFYSSVRLDIRRIGSIKKGDEVVGNETRVKVVKNKVAPPFKQAEFDIMYGAGISREGEIIDLGVAANVIEKSGAWYSYSGNRIGQGKDNVREYLKENRAMAIEIENKIRDNQGIVARAAEFAPTAEESAED.

An ATP-binding site is contributed by 73–80 (GPESSGKT).

The protein belongs to the RecA family.

It is found in the cytoplasm. Can catalyze the hydrolysis of ATP in the presence of single-stranded DNA, the ATP-dependent uptake of single-stranded DNA by duplex DNA, and the ATP-dependent hybridization of homologous single-stranded DNAs. It interacts with LexA causing its activation and leading to its autocatalytic cleavage. The protein is Protein RecA of Bordetella avium (strain 197N).